The sequence spans 311 residues: S-adenosyl-L-methionine-dependent tRNA 4-demethylwyosine synthase (311 aa).

6 residues coordinate [4Fe-4S] cluster: Cys-26, Cys-39, Cys-52, Cys-62, Cys-66, and Cys-69. Residues 45 to 283 (YGIETHRCIQ…LKLAKMLDEN (239 aa)) form the Radical SAM core domain.

Belongs to the TYW1 family. In terms of assembly, monomer. It depends on [4Fe-4S] cluster as a cofactor.

The protein localises to the cytoplasm. The enzyme catalyses N(1)-methylguanosine(37) in tRNA(Phe) + pyruvate + S-adenosyl-L-methionine = 4-demethylwyosine(37) in tRNA(Phe) + 5'-deoxyadenosine + L-methionine + CO2 + H2O. In terms of biological role, component of the wyosine derivatives biosynthesis pathway that catalyzes the condensation of N-methylguanine with 2 carbon atoms from pyruvate to form the tricyclic 4-demethylwyosine (imG-14) on guanosine-37 of tRNA(Phe). This is S-adenosyl-L-methionine-dependent tRNA 4-demethylwyosine synthase from Methanocaldococcus jannaschii (strain ATCC 43067 / DSM 2661 / JAL-1 / JCM 10045 / NBRC 100440) (Methanococcus jannaschii).